The chain runs to 286 residues: Bifunctional protein FolD (286 aa).

Residues 166–168 (GAS) and isoleucine 232 each bind NADP(+).

Belongs to the tetrahydrofolate dehydrogenase/cyclohydrolase family. In terms of assembly, homodimer.

It catalyses the reaction (6R)-5,10-methylene-5,6,7,8-tetrahydrofolate + NADP(+) = (6R)-5,10-methenyltetrahydrofolate + NADPH. The enzyme catalyses (6R)-5,10-methenyltetrahydrofolate + H2O = (6R)-10-formyltetrahydrofolate + H(+). Its pathway is one-carbon metabolism; tetrahydrofolate interconversion. Its function is as follows. Catalyzes the oxidation of 5,10-methylenetetrahydrofolate to 5,10-methenyltetrahydrofolate and then the hydrolysis of 5,10-methenyltetrahydrofolate to 10-formyltetrahydrofolate. The polypeptide is Bifunctional protein FolD (Shewanella denitrificans (strain OS217 / ATCC BAA-1090 / DSM 15013)).